We begin with the raw amino-acid sequence, 466 residues long: Tryptophan synthase beta chain 2, chloroplastic (466 aa).

N6-(pyridoxal phosphate)lysine is present on Lys161.

It belongs to the TrpB family. In terms of assembly, tetramer of two alpha and two beta chains. The cofactor is pyridoxal 5'-phosphate.

It is found in the plastid. The protein resides in the chloroplast. The enzyme catalyses (1S,2R)-1-C-(indol-3-yl)glycerol 3-phosphate + L-serine = D-glyceraldehyde 3-phosphate + L-tryptophan + H2O. Its pathway is amino-acid biosynthesis; L-tryptophan biosynthesis; L-tryptophan from chorismate: step 5/5. Its function is as follows. The beta subunit is responsible for the synthesis of L-tryptophan from indole and L-serine. The protein is Tryptophan synthase beta chain 2, chloroplastic (TSB) of Camptotheca acuminata (Happy tree).